The following is a 206-amino-acid chain: Oligoribonuclease (206 aa).

In terms of domain architecture, Exonuclease spans 20–183 (LVWLDMEMTG…ADIHESIDEL (164 aa)). The active site involves Tyr-141.

The protein belongs to the oligoribonuclease family.

Its subcellular location is the cytoplasm. 3'-to-5' exoribonuclease specific for small oligoribonucleotides. This chain is Oligoribonuclease, found in Burkholderia ambifaria (strain ATCC BAA-244 / DSM 16087 / CCUG 44356 / LMG 19182 / AMMD) (Burkholderia cepacia (strain AMMD)).